The primary structure comprises 158 residues: Protein E6 (158 aa).

Zinc fingers lie at residues 32–68 and 105–141; these read CVYCRRQLQRTEVYEFAFGDLNVVYRDGVPLAACQSC and CMCCLKPLSPAEKLRHLNSKRRFHKIAGNFTGQCRHC. Residues 156–158 carry the PDZ-binding domain motif; it reads TQV.

Belongs to the papillomaviridae E6 protein family. As to quaternary structure, forms homodimers. Interacts with ubiquitin-protein ligase UBE3A/E6-AP; this interaction stimulates UBE3A ubiquitin activity. Interacts with host BAK1.

The protein resides in the host cytoplasm. It localises to the host nucleus. Functionally, plays a major role in the induction and maintenance of cellular transformation. E6 associates with host UBE3A/E6-AP ubiquitin-protein ligase and modulates its activity. Protects host keratinocytes from apoptosis by mediating the degradation of host BAK1. May also inhibit host immune response. The sequence is that of Protein E6 from Homo sapiens (Human).